A 179-amino-acid polypeptide reads, in one-letter code: Large ribosomal subunit protein uL5 (179 aa).

Belongs to the universal ribosomal protein uL5 family. In terms of assembly, part of the 50S ribosomal subunit; part of the 5S rRNA/L5/L18/L25 subcomplex. Contacts the 5S rRNA and the P site tRNA. Forms a bridge to the 30S subunit in the 70S ribosome.

Its function is as follows. This is one of the proteins that bind and probably mediate the attachment of the 5S RNA into the large ribosomal subunit, where it forms part of the central protuberance. In the 70S ribosome it contacts protein S13 of the 30S subunit (bridge B1b), connecting the 2 subunits; this bridge is implicated in subunit movement. Contacts the P site tRNA; the 5S rRNA and some of its associated proteins might help stabilize positioning of ribosome-bound tRNAs. The chain is Large ribosomal subunit protein uL5 from Buchnera aphidicola subsp. Cinara cedri (strain Cc).